The primary structure comprises 415 residues: Histidine--tRNA ligase (415 aa).

The protein belongs to the class-II aminoacyl-tRNA synthetase family. In terms of assembly, homodimer.

It localises to the cytoplasm. It catalyses the reaction tRNA(His) + L-histidine + ATP = L-histidyl-tRNA(His) + AMP + diphosphate + H(+). This is Histidine--tRNA ligase from Rickettsia akari (strain Hartford).